A 190-amino-acid polypeptide reads, in one-letter code: Elongation factor P 2 (190 aa).

This sequence belongs to the elongation factor P family.

It localises to the cytoplasm. The protein operates within protein biosynthesis; polypeptide chain elongation. Involved in peptide bond synthesis. Stimulates efficient translation and peptide-bond synthesis on native or reconstituted 70S ribosomes in vitro. Probably functions indirectly by altering the affinity of the ribosome for aminoacyl-tRNA, thus increasing their reactivity as acceptors for peptidyl transferase. In Chlamydia muridarum (strain MoPn / Nigg), this protein is Elongation factor P 2 (efp2).